A 477-amino-acid chain; its full sequence is Mannitol 2-dehydrogenase (477 aa).

19-30 is a binding site for NAD(+); that stretch reads IVHIGVGNFHRA.

It belongs to the mannitol dehydrogenase family. In terms of assembly, monomer.

The enzyme catalyses D-mannitol + NAD(+) = D-fructose + NADH + H(+). In Cereibacter sphaeroides (Rhodobacter sphaeroides), this protein is Mannitol 2-dehydrogenase (mtlK).